An 84-amino-acid chain; its full sequence is Cell division topological specificity factor (84 aa).

The protein belongs to the MinE family.

Prevents the cell division inhibition by proteins MinC and MinD at internal division sites while permitting inhibition at polar sites. This ensures cell division at the proper site by restricting the formation of a division septum at the midpoint of the long axis of the cell. The chain is Cell division topological specificity factor from Cupriavidus pinatubonensis (strain JMP 134 / LMG 1197) (Cupriavidus necator (strain JMP 134)).